The chain runs to 427 residues: Glutamate-1-semialdehyde 2,1-aminomutase (427 aa).

K265 is modified (N6-(pyridoxal phosphate)lysine).

It belongs to the class-III pyridoxal-phosphate-dependent aminotransferase family. HemL subfamily. As to quaternary structure, homodimer. Pyridoxal 5'-phosphate is required as a cofactor.

The protein localises to the cytoplasm. It catalyses the reaction (S)-4-amino-5-oxopentanoate = 5-aminolevulinate. It functions in the pathway porphyrin-containing compound metabolism; protoporphyrin-IX biosynthesis; 5-aminolevulinate from L-glutamyl-tRNA(Glu): step 2/2. This chain is Glutamate-1-semialdehyde 2,1-aminomutase, found in Neisseria meningitidis serogroup A / serotype 4A (strain DSM 15465 / Z2491).